We begin with the raw amino-acid sequence, 461 residues long: Cysteine--tRNA ligase (461 aa).

Cys30 lines the Zn(2+) pocket. The 'HIGH' region signature appears at 32-42 (VTVYDLCHIGH). 3 residues coordinate Zn(2+): Cys211, His236, and Glu240. Residues 268-272 (KMSKS) carry the 'KMSKS' region motif. Position 271 (Lys271) interacts with ATP.

It belongs to the class-I aminoacyl-tRNA synthetase family. As to quaternary structure, monomer. The cofactor is Zn(2+).

Its subcellular location is the cytoplasm. It carries out the reaction tRNA(Cys) + L-cysteine + ATP = L-cysteinyl-tRNA(Cys) + AMP + diphosphate. This Shewanella sp. (strain MR-4) protein is Cysteine--tRNA ligase.